The chain runs to 276 residues: NAD-capped RNA hydrolase NudC (276 aa).

Position 82 (Arg-82) interacts with substrate. 2 residues coordinate Zn(2+): Cys-112 and Cys-115. Residue Glu-125 participates in substrate binding. Zn(2+) contacts are provided by Cys-130 and Cys-133. Tyr-138 serves as a coordination point for substrate. Positions 139–262 (PRISPSMIVL…SIARYLIDLY (124 aa)) constitute a Nudix hydrolase domain. A divalent metal cation-binding residues include Ala-172, Glu-188, and Glu-192. Positions 173 to 194 (GFAEPGESAEDCLVREVREEVA) match the Nudix box motif. Substrate is bound at residue 206-213 (QCWPFPHS). Glu-233 lines the a divalent metal cation pocket. Ala-255 lines the substrate pocket.

The protein belongs to the Nudix hydrolase family. NudC subfamily. As to quaternary structure, homodimer. Mg(2+) serves as cofactor. The cofactor is Mn(2+). It depends on Zn(2+) as a cofactor.

It catalyses the reaction a 5'-end NAD(+)-phospho-ribonucleoside in mRNA + H2O = a 5'-end phospho-adenosine-phospho-ribonucleoside in mRNA + beta-nicotinamide D-ribonucleotide + 2 H(+). The catalysed reaction is NAD(+) + H2O = beta-nicotinamide D-ribonucleotide + AMP + 2 H(+). The enzyme catalyses NADH + H2O = reduced beta-nicotinamide D-ribonucleotide + AMP + 2 H(+). In terms of biological role, mRNA decapping enzyme that specifically removes the nicotinamide adenine dinucleotide (NAD) cap from a subset of mRNAs by hydrolyzing the diphosphate linkage to produce nicotinamide mononucleotide (NMN) and 5' monophosphate mRNA. The NAD-cap is present at the 5'-end of some mRNAs and stabilizes RNA against 5'-processing. Has preference for mRNAs with a 5'-end purine. Catalyzes the hydrolysis of a broad range of dinucleotide pyrophosphates. The chain is NAD-capped RNA hydrolase NudC from Pseudomonas putida (strain ATCC 47054 / DSM 6125 / CFBP 8728 / NCIMB 11950 / KT2440).